We begin with the raw amino-acid sequence, 940 residues long: Serine/threonine-protein kinase PLK4 (940 aa).

The region spanning F12–M265 is the Protein kinase domain. Residues L18–V26 and K41 contribute to the ATP site. D136 functions as the Proton acceptor in the catalytic mechanism. Disordered stretches follow at residues H262–R353 and R409–V529. The segment covering S273–R305 has biased composition (low complexity). 3 stretches are compositionally biased toward polar residues: residues F337–D349, N440–F465, and G494–N519. A Cryptic POLO box 1 (CPB1) domain is found at C563–K676. Residues T677 to P791 enclose the Cryptic POLO box 2 (CPB2) domain. The 79-residue stretch at K857–N935 folds into the POLO box domain.

It belongs to the protein kinase superfamily. Ser/Thr protein kinase family. CDC5/Polo subfamily. In terms of assembly, homodimer. In terms of processing, ubiquitinated; leading to its degradation by the proteasome.

It is found in the cytoplasm. It localises to the cytoskeleton. Its subcellular location is the microtubule organizing center. The protein localises to the centrosome. The protein resides in the centriole. The enzyme catalyses L-seryl-[protein] + ATP = O-phospho-L-seryl-[protein] + ADP + H(+). It carries out the reaction L-threonyl-[protein] + ATP = O-phospho-L-threonyl-[protein] + ADP + H(+). In terms of biological role, serine/threonine-protein kinase that plays a central role in centriole duplication. Able to trigger procentriole formation on the surface of the parental centriole cylinder, leading to the recruitment of centriole biogenesis proteins such as sass6, cpap, ccp110, cep135 and gamma-tubulin. When overexpressed, it is able to induce centrosome amplification through the simultaneous generation of multiple procentrioles adjoining each parental centriole during S phase. Its central role in centriole replication suggests a possible role in tumorigenesis, centrosome aberrations being frequently observed in tumors. Also involved in deuterosome-mediated centriole amplification in multiciliated that can generate more than 100 centrioles. The chain is Serine/threonine-protein kinase PLK4 from Danio rerio (Zebrafish).